The chain runs to 206 residues: Large ribosomal subunit protein eL8 (206 aa).

Belongs to the eukaryotic ribosomal protein eL8 family. As to quaternary structure, component of the large ribosomal subunit.

The protein localises to the cytoplasm. In Encephalitozoon cuniculi (strain GB-M1) (Microsporidian parasite), this protein is Large ribosomal subunit protein eL8 (RPL7A).